We begin with the raw amino-acid sequence, 626 residues long: Replication protein E1 (626 aa).

Positions 82–84 (KRK) match the Nuclear localization signal motif. Phosphoserine; by host is present on residues Ser-90 and Ser-106. The segment at 160-327 (QSQQNSNLHL…ILITENSSEV (168 aa)) is DNA-binding region. Positions 412 to 576 (GSWLVIMQFL…CPLNEDGKPL (165 aa)) constitute an SF3 helicase domain. Residue 452–459 (GPPDTGKS) coordinates ATP. Residue Lys-533 forms a Glycyl lysine isopeptide (Lys-Gly) (interchain with G-Cter in SUMO) linkage. Residues 598–608 (SDQEEEEEGDE) are compositionally biased toward acidic residues. The disordered stretch occupies residues 598–626 (SDQEEEEEGDENGSRGTFICSTRNSNDFT). The segment covering 616 to 626 (ICSTRNSNDFT) has biased composition (polar residues).

This sequence belongs to the papillomaviridae E1 protein family. As to quaternary structure, can form hexamers. Interacts with E2 protein; this interaction increases E1 DNA binding specificity. Interacts with host DNA polymerase subunit POLA2. Interacts with host single stranded DNA-binding protein RPA1. Interacts with host TOP1; this interaction stimulates the enzymatic activity of TOP1. Phosphorylated. Post-translationally, sumoylated.

It localises to the host nucleus. It carries out the reaction Couples ATP hydrolysis with the unwinding of duplex DNA by translocating in the 3'-5' direction.. It catalyses the reaction ATP + H2O = ADP + phosphate + H(+). Its function is as follows. ATP-dependent DNA 3'-5' helicase required for initiation of viral DNA replication. It forms a complex with the viral E2 protein. The E1-E2 complex binds to the replication origin which contains binding sites for both proteins. During the initial step, a dimer of E1 interacts with a dimer of protein E2 leading to a complex that binds the viral origin of replication with high specificity. Then, a second dimer of E1 displaces the E2 dimer in an ATP-dependent manner to form the E1 tetramer. Following this, two E1 monomers are added to each half of the site, which results in the formation of two E1 trimers on the viral ori. Subsequently, two hexamers will be created. The double hexamer acts as a bi-directional helicase machinery and unwinds the viral DNA and then recruits the host DNA polymerase to start replication. This Bovine papillomavirus type 5 protein is Replication protein E1.